A 1237-amino-acid polypeptide reads, in one-letter code: ATP-dependent RNA helicase DEAH13 (1237 aa).

Disordered regions lie at residues 1-51 and 115-148; these read MASV…NSNV and AMQLSKAGVETEHSDESVEQNDNDDDSCMDEPTT. Residues 24 to 38 show a composition bias toward polar residues; it reads SNKMQDKLNSNNNTG. A compositionally biased stretch (acidic residues) spans 131 to 143; that stretch reads SVEQNDNDDDSCM. Residues 251-443 form the Helicase ATP-binding domain; sequence MEAINRHPAV…KRLFPNIPPL (193 aa). ATP is bound at residue 264–271; the sequence is GQTGCGKT. The short motif at 367-370 is the DEAH box element; sequence DEAH. The segment at 543 to 585 is disordered; that stretch reads DDDSNNQNSRFSSHGEDPSDIGDGNYDDDFEEEDMYESDEDRD. Over residues 567–585 the composition is skewed to acidic residues; it reads NYDDDFEEEDMYESDEDRD. The 172-residue stretch at 605-776 folds into the Helicase C-terminal domain; sequence ALRAAFNALA…GVILLMKSMN (172 aa). Positions 876-910 are disordered; that stretch reads EKKNESKDADKTVKQEDKQRKKDRKEKIKAARDRF.

It belongs to the DEAD box helicase family. DEAH subfamily.

The enzyme catalyses ATP + H2O = ADP + phosphate + H(+). The chain is ATP-dependent RNA helicase DEAH13 from Arabidopsis thaliana (Mouse-ear cress).